The chain runs to 334 residues: Serine/threonine-protein kinase (334 aa).

One can recognise a Protein kinase domain in the interval 53-333 (FEVLQPLQSG…DEILNFGMWT (281 aa)). Residues 59-67 (LQSGSEGRV) and lysine 82 contribute to the ATP site. Aspartate 167 (proton acceptor) is an active-site residue.

This sequence belongs to the protein kinase superfamily. Ser/Thr protein kinase family.

The enzyme catalyses L-seryl-[protein] + ATP = O-phospho-L-seryl-[protein] + ADP + H(+). It carries out the reaction L-threonyl-[protein] + ATP = O-phospho-L-threonyl-[protein] + ADP + H(+). In terms of biological role, able to phosphorylate in vitro the major virion phosphoprotein phosphorylated in vivo. The polypeptide is Serine/threonine-protein kinase (PK) (Sus scrofa (Pig)).